A 219-amino-acid chain; its full sequence is Orotate phosphoribosyltransferase (219 aa).

A 5-phospho-alpha-D-ribose 1-diphosphate-binding site is contributed by K26. Residue 34–35 (FF) participates in orotate binding. Residues 72–73 (YK), R98, K99, K102, H104, and 124–132 (DDVITAGTA) each bind 5-phospho-alpha-D-ribose 1-diphosphate. Orotate-binding residues include T128 and R156.

Belongs to the purine/pyrimidine phosphoribosyltransferase family. PyrE subfamily. As to quaternary structure, homodimer. Mg(2+) serves as cofactor.

It carries out the reaction orotidine 5'-phosphate + diphosphate = orotate + 5-phospho-alpha-D-ribose 1-diphosphate. Its pathway is pyrimidine metabolism; UMP biosynthesis via de novo pathway; UMP from orotate: step 1/2. Functionally, catalyzes the transfer of a ribosyl phosphate group from 5-phosphoribose 1-diphosphate to orotate, leading to the formation of orotidine monophosphate (OMP). The chain is Orotate phosphoribosyltransferase from Xylella fastidiosa (strain Temecula1 / ATCC 700964).